The chain runs to 320 residues: Cytochrome f (320 aa).

An N-terminal signal peptide occupies residues 1–35 (MQTRNTFSWIREEITRSISVSLMIYIITWASISSA). Residues tyrosine 36, cysteine 56, cysteine 59, and histidine 60 each contribute to the heme site. The helical transmembrane segment at 286-306 (VQGLLFFLGSVVLAQIFLVLK) threads the bilayer.

This sequence belongs to the cytochrome f family. The 4 large subunits of the cytochrome b6-f complex are cytochrome b6, subunit IV (17 kDa polypeptide, petD), cytochrome f and the Rieske protein, while the 4 small subunits are PetG, PetL, PetM and PetN. The complex functions as a dimer. The cofactor is heme.

The protein localises to the plastid. It is found in the chloroplast thylakoid membrane. Its function is as follows. Component of the cytochrome b6-f complex, which mediates electron transfer between photosystem II (PSII) and photosystem I (PSI), cyclic electron flow around PSI, and state transitions. In Nasturtium officinale (Watercress), this protein is Cytochrome f.